A 303-amino-acid chain; its full sequence is US1 protein (303 aa).

The disordered stretch occupies residues 230-284 (IPAPGRPLPRRRPSEGGMRAPRRRSRAPAPARSTAAAATPPRPGDPRAPAARRAG). Low complexity predominate over residues 256–268 (APAPARSTAAAAT).

This sequence belongs to the herpesviridae US2 family.

The protein is US1 protein (US1) of Equine herpesvirus 1 (strain Kentucky A) (EHV-1).